Here is a 465-residue protein sequence, read N- to C-terminus: MNAQLTMEAIGELHGVSHEPVPAPADLLGGSPHARSSVAHRGSHLPPAHPRSMGMASLLDGGSGGGDYHHHHRAPEHSLAGPLHPTMTMACETPPGMSMPTTYTTLTPLQPLPPISTVSDKFPHHHHHHHHHHHPHHHQRLAGNVSGSFTLMRDERGLASMNNLYTPYHKDVAGMGQSLSPLSSSGLGSIHNSQQGLPHYAHPGAAMPTDKMLTPNGFEAHHPAMLGRHGEQHLTPTSAGMVPINGLPPHHPHAHLNAQGHGQLLGTAREPNPSVTGAQVSNGSNSGQMEEINTKEVAQRITTELKRYSIPQAIFAQRVLCRSQGTLSDLLRNPKPWSKLKSGRETFRRMWKWLQEPEFQRMSALRLAACKRKEQEHGKDRGNTPKKPRLVFTDVQRRTLHAIFKENKRPSKELQITISQQLGLELSTVSNFFMNARRRSLDKWQDEGSSNSGNSSSSSSTCTKA.

Disordered stretches follow at residues 17-55 (SHEPVPAPADLLGGSPHARSSVAHRGSHLPPAHPRSMGM), 120-141 (DKFPHHHHHHHHHHHPHHHQRL), 264-290 (LLGTAREPNPSVTGAQVSNGSNSGQME), and 442-465 (DKWQDEGSSNSGNSSSSSSTCTKA). A compositionally biased stretch (basic residues) spans 123–140 (PHHHHHHHHHHHPHHHQR). Over residues 273-288 (PSVTGAQVSNGSNSGQ) the composition is skewed to polar residues. Positions 283-369 (GSNSGQMEEI…QRMSALRLAA (87 aa)) form a DNA-binding region, CUT. A DNA-binding region (homeobox) is located at residues 385–444 (PKKPRLVFTDVQRRTLHAIFKENKRPSKELQITISQQLGLELSTVSNFFMNARRRSLDKW). The segment covering 448–465 (GSSNSGNSSSSSSTCTKA) has biased composition (low complexity).

It belongs to the CUT homeobox family. As to quaternary structure, binds DNA as a monomer. In terms of tissue distribution, highly expressed in liver; lower expression in testis and skin.

Its subcellular location is the nucleus. Its function is as follows. Transcriptional activator. Binds the consensus sequence 5'-DHWATTGAYTWWD-3' on a variety of gene promoters such as those of HNF3B and TTR. Important for liver genes transcription. In Homo sapiens (Human), this protein is Hepatocyte nuclear factor 6 (ONECUT1).